The following is a 524-amino-acid chain: G1/S-specific cyclin-E (524 aa).

The disordered stretch occupies residues Met1–Glu155. Residues Lys18–Ile47 are compositionally biased toward basic and acidic residues. Positions Pro48 to Ser62 are enriched in polar residues. Composition is skewed to basic and acidic residues over residues Asp63–Ala78, Lys86–Ser95, and Glu146–Glu155.

It belongs to the cyclin family. Cyclin E subfamily. As to quaternary structure, interacts with a member of the CDK2/CDK protein kinases to form a serine/threonine kinase holoenzyme complex. The cyclin subunit imparts substrate specificity to the complex. Expressed dynamically in proliferating cells throughout development. Detectable in larval blast cells undergoing active proliferation that give rise to all tissue types, including germline, intestine, hypodermis, neurons, and muscle.

Its subcellular location is the nucleus. It localises to the cytoplasm. The protein resides in the cytoskeleton. The protein localises to the microtubule organizing center. It is found in the centrosome. Its subcellular location is the centriole. Essential for the control of the cell cycle at the G1/S (start) transition. In association with cdk-2, regulates proliferation, quiescent state and cell fate during the development of several cell lineages. In the embryo, initiates the establishment of cell polarity through the recruitment of the centrosomal proteins spd-2 and spd-5 during prophase. During the development of the vulva, controls the onset of vulval cell terminal differentiation by controlling the duration of G1 phase. During hypoderm development at early larval stages, controls syncytial fate of seam cell daughter cells. Involved in the progression of cell division in the intestinal lineage in larvae, and in particular in endoreplication, a specific growth pathway in the intestinal epithelium, required for feeding and gut development in growing larvae. By controlling the activity of translational repressor gld-1, regulates the pool of germline stem cells and the size of the mitotic zone by preventing entry into meiosis. In addition, repression of expression by gld-1 prevents mitosis re-entry in meiotic germline cells. The sequence is that of G1/S-specific cyclin-E from Caenorhabditis elegans.